The sequence spans 144 residues: Large ribosomal subunit protein eL27 (144 aa).

The KOW domain occupies 6–43; sequence IKPGRLVILLNGKYAGRKAVVIKTFDDATASKSRPYGH.

This sequence belongs to the eukaryotic ribosomal protein eL27 family.

In Dictyostelium discoideum (Social amoeba), this protein is Large ribosomal subunit protein eL27 (rpl27).